Consider the following 211-residue polypeptide: Pyridoxine/pyridoxamine 5'-phosphate oxidase (211 aa).

Substrate-binding positions include 8–11 and K66; that span reads RKNY. FMN-binding positions include 61–66, 76–77, K83, and Q105; these read RIVLLK and FT. 3 residues coordinate substrate: Y123, R127, and S131. FMN is bound by residues 140–141 and W184; that span reads QS. A substrate-binding site is contributed by 190 to 192; the sequence is RLH. Position 194 (R194) interacts with FMN.

The protein belongs to the pyridoxamine 5'-phosphate oxidase family. Homodimer. The cofactor is FMN.

The enzyme catalyses pyridoxamine 5'-phosphate + O2 + H2O = pyridoxal 5'-phosphate + H2O2 + NH4(+). The catalysed reaction is pyridoxine 5'-phosphate + O2 = pyridoxal 5'-phosphate + H2O2. It participates in cofactor metabolism; pyridoxal 5'-phosphate salvage; pyridoxal 5'-phosphate from pyridoxamine 5'-phosphate: step 1/1. It functions in the pathway cofactor metabolism; pyridoxal 5'-phosphate salvage; pyridoxal 5'-phosphate from pyridoxine 5'-phosphate: step 1/1. Functionally, catalyzes the oxidation of either pyridoxine 5'-phosphate (PNP) or pyridoxamine 5'-phosphate (PMP) into pyridoxal 5'-phosphate (PLP). The sequence is that of Pyridoxine/pyridoxamine 5'-phosphate oxidase from Polynucleobacter asymbioticus (strain DSM 18221 / CIP 109841 / QLW-P1DMWA-1) (Polynucleobacter necessarius subsp. asymbioticus).